The primary structure comprises 113 residues: MAGFGLPNFGQLTEAFRKAQQIQQDAQKLQEELDAMEIEGNSEDGRASIWLSGNQQPLRVRLDPSLLSEGQEATEAATLAALQSAYERSTGTMKERMEELTGGLNLNLPGMGG.

Belongs to the YbaB/EbfC family. As to quaternary structure, homodimer.

It localises to the cytoplasm. The protein localises to the nucleoid. Functionally, binds to DNA and alters its conformation. May be involved in regulation of gene expression, nucleoid organization and DNA protection. The polypeptide is Nucleoid-associated protein sync_0026 (Synechococcus sp. (strain CC9311)).